The chain runs to 372 residues: Aryl-hydrocarbon-interacting protein-like 1 (372 aa).

One can recognise a PPIase FKBP-type domain in the interval 53–145 (REVGQPMHII…DLDELQKEPQ (93 aa)). TPR repeat units lie at residues 178–211 (VPVLHGEGNRLFKLGRYEEASSKYQEAIICLRNL), 230–263 (NTLILNYCQCLLKKEEYYEVLEHTSDILRHHPGI), and 264–297 (VKAYYVRARAHAEVWNEAEAKADLQKVLELEPSM). Positions 325-372 (NMLSQGATWSPAEPPAEPPAESSTEPPAEPPAEPPAELTLTPGHPLQH) are disordered.

As to quaternary structure, interacts with NUB1.

The protein localises to the cytoplasm. Its subcellular location is the nucleus. May be important in protein trafficking and/or protein folding and stabilization. In Saimiri boliviensis boliviensis (Bolivian squirrel monkey), this protein is Aryl-hydrocarbon-interacting protein-like 1 (AIPL1).